A 298-amino-acid polypeptide reads, in one-letter code: tRNA pseudouridine synthase B (298 aa).

Asp39 functions as the Nucleophile in the catalytic mechanism.

Belongs to the pseudouridine synthase TruB family. Type 1 subfamily.

It catalyses the reaction uridine(55) in tRNA = pseudouridine(55) in tRNA. Functionally, responsible for synthesis of pseudouridine from uracil-55 in the psi GC loop of transfer RNAs. The sequence is that of tRNA pseudouridine synthase B from Oenococcus oeni (strain ATCC BAA-331 / PSU-1).